We begin with the raw amino-acid sequence, 127 residues long: Ribosome-binding factor A (127 aa).

Belongs to the RbfA family. Monomer. Binds 30S ribosomal subunits, but not 50S ribosomal subunits or 70S ribosomes.

Its subcellular location is the cytoplasm. One of several proteins that assist in the late maturation steps of the functional core of the 30S ribosomal subunit. Associates with free 30S ribosomal subunits (but not with 30S subunits that are part of 70S ribosomes or polysomes). Required for efficient processing of 16S rRNA. May interact with the 5'-terminal helix region of 16S rRNA. The chain is Ribosome-binding factor A from Stenotrophomonas maltophilia (strain R551-3).